Reading from the N-terminus, the 227-residue chain is Orotidine 5'-phosphate decarboxylase (227 aa).

Residues Asp8, Lys30, 59-68 (DLKLYDIPYT), Thr118, Arg178, Gln187, Gly207, and Arg208 contribute to the substrate site. Lys61 (proton donor) is an active-site residue.

Belongs to the OMP decarboxylase family. Type 1 subfamily. In terms of assembly, homodimer.

The enzyme catalyses orotidine 5'-phosphate + H(+) = UMP + CO2. Its pathway is pyrimidine metabolism; UMP biosynthesis via de novo pathway; UMP from orotate: step 2/2. In terms of biological role, catalyzes the decarboxylation of orotidine 5'-monophosphate (OMP) to uridine 5'-monophosphate (UMP). This Helicobacter pylori (strain ATCC 700392 / 26695) (Campylobacter pylori) protein is Orotidine 5'-phosphate decarboxylase.